A 273-amino-acid polypeptide reads, in one-letter code: Bis(5'-nucleosyl)-tetraphosphatase, symmetrical (273 aa).

The protein belongs to the Ap4A hydrolase family.

The catalysed reaction is P(1),P(4)-bis(5'-adenosyl) tetraphosphate + H2O = 2 ADP + 2 H(+). Functionally, hydrolyzes diadenosine 5',5'''-P1,P4-tetraphosphate to yield ADP. The polypeptide is Bis(5'-nucleosyl)-tetraphosphatase, symmetrical (Histophilus somni (strain 129Pt) (Haemophilus somnus)).